Here is a 392-residue protein sequence, read N- to C-terminus: Succinate--CoA ligase [ADP-forming] subunit beta (392 aa).

Residues 9-236 (RDLFERHGLP…QAAVDPLEQA (228 aa)) enclose the ATP-grasp domain. ATP is bound by residues K45, 52 to 54 (GRG), A94, and E99. Mg(2+)-binding residues include N191 and D205. Residues N256 and 318 to 320 (GIT) contribute to the substrate site.

The protein belongs to the succinate/malate CoA ligase beta subunit family. Heterotetramer of two alpha and two beta subunits. Mg(2+) is required as a cofactor.

The enzyme catalyses succinate + ATP + CoA = succinyl-CoA + ADP + phosphate. The catalysed reaction is GTP + succinate + CoA = succinyl-CoA + GDP + phosphate. The protein operates within carbohydrate metabolism; tricarboxylic acid cycle; succinate from succinyl-CoA (ligase route): step 1/1. Succinyl-CoA synthetase functions in the citric acid cycle (TCA), coupling the hydrolysis of succinyl-CoA to the synthesis of either ATP or GTP and thus represents the only step of substrate-level phosphorylation in the TCA. The beta subunit provides nucleotide specificity of the enzyme and binds the substrate succinate, while the binding sites for coenzyme A and phosphate are found in the alpha subunit. The polypeptide is Succinate--CoA ligase [ADP-forming] subunit beta (Salinispora arenicola (strain CNS-205)).